The sequence spans 349 residues: Galanin receptor type 1 (349 aa).

The Extracellular segment spans residues 1-36 (MELAVGNLSEGNASWPEPPAPEPGPLFGIGVENFVT). Residues asparagine 7 and asparagine 12 are each glycosylated (N-linked (GlcNAc...) asparagine). Residues 37–57 (LVVFGLIFALGVLGNSLVITV) traverse the membrane as a helical segment. Over 58–70 (LARSKPGKPRSTT) the chain is Cytoplasmic. A helical transmembrane segment spans residues 71-91 (NLFILNLSIADLAYLLFCIPF). The Extracellular segment spans residues 92–109 (QATVYALPTWVLGAFICK). Cysteine 108 and cysteine 187 form a disulfide bridge. A helical transmembrane segment spans residues 110–131 (FIHYFFTVSMLVSIFTLAAMSV). Residues 132–151 (DRYVAIVHSRRSSSLRVSRN) are Cytoplasmic-facing. The helical transmembrane segment at 152 to 172 (ALLGVGCIWALSIAMASPVAY) threads the bilayer. The Extracellular portion of the chain corresponds to 173-200 (HQGLFHPRASNQTFCWEQWPDPRHKKAY). N-linked (GlcNAc...) asparagine glycosylation is present at asparagine 183. Residues 201–221 (VVCTFVFGYLLPLLLICFCYA) traverse the membrane as a helical segment. Over 222–248 (KVLNHLHKKLKNMSKKSEASKKKTAQT) the chain is Cytoplasmic. A helical transmembrane segment spans residues 249–269 (VLVVVVVFGISWLPHHIIHLW). Residues 270 to 271 (AE) are Extracellular-facing. The helical transmembrane segment at 272–292 (FGVFPLTPASFLFRITAHCLA) threads the bilayer. At 293 to 349 (YSNSSVNPIIYAFLSENFRKAYKQVFKCHIRKDSHLSDTKESKSRIDTPPSTNCTHV) the chain is on the cytoplasmic side. Cysteine 320 is lipidated: S-palmitoyl cysteine.

It belongs to the G-protein coupled receptor 1 family. As to quaternary structure, interacts with GRP39 AND HTR1A. In terms of processing, palmitoylated on at least one of the three cysteine residues present in the C-terminal part.

The protein resides in the cell membrane. Its function is as follows. Receptor for the hormone galanin. The activity of this receptor is mediated by G proteins that inhibit adenylate cyclase activity. This Homo sapiens (Human) protein is Galanin receptor type 1 (GALR1).